A 1071-amino-acid chain; its full sequence is MKLIYTEMSYSMTEILVNEARKAADQGYRVFYIAPNSLSFEKEREVLTLLPERGTFSIIVTRFVQMSRYFTVESSPSKQHLDDTTLAMIFYRALMQLKPEDLPSYGRLQNNSVFIEQLVELYKELKNAQLSVHDLTGLDHPQKQEDLIKIIELAETIMIQQDYNQDSPLQSFARAIKLGLLNNQLSKTVVVIDGFSRFSAEEDYLLSLLNNNCQEVIIGSYVSQKAYQKSFIKGNIYEASLHFLQDLAQKYHIKPVFATSNQVFKPAFSRLTQLFEATHDFSQVDWQLQKNDLDHFSLWQCHHQKEEIEHVAKSIRQKLYEGYRYKDILVLLGDMDAYQLQIGPIFDKFEIPYYLGKAEPMAAHPLVQFIESLERSQRYNWRREDILNMLKSGLFGCFDDSDIDRFEEYTQFADIKGFTKFSKPFTINSSRQYPLDFLNEMRQDIVLPLQELFKSQKQLGASLVDKLILFLKKIRLAENMQGLAQSQLEVEKNEEVWKRFTDILTSFHHIFGQEKLRLSDCLALIKTGMKSAQYRVVPATLDVVTIKSYDLVQPHSKPFVYAIGLTQSHFPKQIHHSGLLSDQERARINEIRNYRHFDIASAENSKKNHQTALSLFNAATKELVLSVPTVINETFDDLSPYLKELINFGLPLLDKGKNYLSYDNSDIANYKALLSQIIAINRQDLIEMADQDKMFWTGVLRYLRKQLRKQQLELPTSDYRLSTKPLSKEVIEVCFPKGIPLKLSATALTVFYNNQYNYFLKYVLNLNKTESIHPDSRIHGQYLHRVFERLMKDHTQEPFDNKLKQAIYHTNQESFFQQVYQDNAEAEYSLAILEDIVRSTAPILQLNQNIQVIDQEKNFQLDMGNEILVHGIIDRIDQLSDGSLGIVDYKSSANQFDIGTFYNGLSPQLVTYLAALKQIAPHDINQLFGAMYLHLQDPKLDLVTFKQIDNTLVESIYKALTYKGIFSEVEKEHLSTGAYQTKNALYSNDELETLLNYNKYLYLKAAKHIKKGHFLINPYTSDGKTVQGDQLKAITRFEADLDMGQARRLVTLPAKEKKECFLTLMRKESHL.

The protein belongs to the helicase family. AddB/RexB type 2 subfamily. Heterodimer of AddA and RexB. Mg(2+) is required as a cofactor.

The heterodimer acts as both an ATP-dependent DNA helicase and an ATP-dependent, dual-direction single-stranded exonuclease. Recognizes the chi site generating a DNA molecule suitable for the initiation of homologous recombination. This subunit has 5' -&gt; 3' nuclease activity but not helicase activity. The sequence is that of ATP-dependent helicase/deoxyribonuclease subunit B from Streptococcus pyogenes serotype M49 (strain NZ131).